The chain runs to 431 residues: Gamma-glutamyl phosphate reductase (431 aa).

Belongs to the gamma-glutamyl phosphate reductase family.

Its subcellular location is the cytoplasm. The enzyme catalyses L-glutamate 5-semialdehyde + phosphate + NADP(+) = L-glutamyl 5-phosphate + NADPH + H(+). It functions in the pathway amino-acid biosynthesis; L-proline biosynthesis; L-glutamate 5-semialdehyde from L-glutamate: step 2/2. Catalyzes the NADPH-dependent reduction of L-glutamate 5-phosphate into L-glutamate 5-semialdehyde and phosphate. The product spontaneously undergoes cyclization to form 1-pyrroline-5-carboxylate. This chain is Gamma-glutamyl phosphate reductase, found in Trichodesmium erythraeum (strain IMS101).